A 129-amino-acid chain; its full sequence is Large ribosomal subunit protein bL17 (129 aa).

This sequence belongs to the bacterial ribosomal protein bL17 family. As to quaternary structure, part of the 50S ribosomal subunit. Contacts protein L32.

This chain is Large ribosomal subunit protein bL17, found in Yersinia pseudotuberculosis serotype O:1b (strain IP 31758).